A 479-amino-acid polypeptide reads, in one-letter code: Ribulose bisphosphate carboxylase large chain (479 aa).

The propeptide occupies methionine 1–serine 2. Residues asparagine 123 and threonine 173 each coordinate substrate. The active-site Proton acceptor is lysine 175. Lysine 177 serves as a coordination point for substrate. Residues lysine 201, aspartate 203, and glutamate 204 each contribute to the Mg(2+) site. At lysine 201 the chain carries N6-carboxylysine. Residue serine 208 is modified to Phosphoserine. The active-site Proton acceptor is histidine 294. Substrate is bound by residues arginine 295 and histidine 327. Threonine 330 is subject to Phosphothreonine. A substrate-binding site is contributed by serine 379.

Belongs to the RuBisCO large chain family. Type I subfamily. As to quaternary structure, heterohexadecamer of 8 large chains and 8 small chains; disulfide-linked. The disulfide link is formed within the large subunit homodimers. The cofactor is Mg(2+). The disulfide bond which can form in the large chain dimeric partners within the hexadecamer appears to be associated with oxidative stress and protein turnover.

Its subcellular location is the plastid. It is found in the chloroplast. It carries out the reaction 2 (2R)-3-phosphoglycerate + 2 H(+) = D-ribulose 1,5-bisphosphate + CO2 + H2O. The catalysed reaction is D-ribulose 1,5-bisphosphate + O2 = 2-phosphoglycolate + (2R)-3-phosphoglycerate + 2 H(+). In terms of biological role, ruBisCO catalyzes two reactions: the carboxylation of D-ribulose 1,5-bisphosphate, the primary event in carbon dioxide fixation, as well as the oxidative fragmentation of the pentose substrate in the photorespiration process. Both reactions occur simultaneously and in competition at the same active site. The sequence is that of Ribulose bisphosphate carboxylase large chain from Brassica oleracea (Wild cabbage).